We begin with the raw amino-acid sequence, 382 residues long: Histidinol-phosphate aminotransferase (382 aa).

At Lys215 the chain carries N6-(pyridoxal phosphate)lysine. The segment at 363-382 is disordered; that stretch reads NIDNQNKTYSQTSSIRKGTI.

It belongs to the class-II pyridoxal-phosphate-dependent aminotransferase family. Histidinol-phosphate aminotransferase subfamily. Homodimer. It depends on pyridoxal 5'-phosphate as a cofactor.

It catalyses the reaction L-histidinol phosphate + 2-oxoglutarate = 3-(imidazol-4-yl)-2-oxopropyl phosphate + L-glutamate. It participates in amino-acid biosynthesis; L-histidine biosynthesis; L-histidine from 5-phospho-alpha-D-ribose 1-diphosphate: step 7/9. The sequence is that of Histidinol-phosphate aminotransferase from Yersinia pestis bv. Antiqua (strain Antiqua).